A 484-amino-acid chain; its full sequence is F-box/LRR-repeat protein At3g59210 (484 aa).

The F-box domain maps to 6–54; the sequence is KDIINCLPDNLLCQILSNLSTKEAALTSLLSKRWRYLFALVPNLDFDVL. LRR repeat units lie at residues 144 to 170, 172 to 197, 205 to 234, 303 to 334, and 335 to 360; these read KIGP…NLDS, VFEE…SLLN, SCSV…SFDT, TLYL…TIES, and HPEL…VFQG.

This is F-box/LRR-repeat protein At3g59210 from Arabidopsis thaliana (Mouse-ear cress).